A 319-amino-acid chain; its full sequence is Aminoimidazole riboside kinase (319 aa).

5-amino-1-(beta-D-ribosyl)imidazole contacts are provided by D16, G31, and Y101. 158-160 lines the ATP pocket; sequence DVN. R162 is a 5-amino-1-(beta-D-ribosyl)imidazole binding site. 3 residues coordinate K(+): A180, A181, and A183. ATP contacts are provided by K187 and E192. Residue G213 coordinates K(+). 220–225 contributes to the ATP binding site; sequence SLGADG. K(+) is bound by residues D246 and T248. Residue D252 coordinates 5-amino-1-(beta-D-ribosyl)imidazole. D252 functions as the Proton acceptor in the catalytic mechanism. N281 serves as a coordination point for ATP. Positions 287, 290, and 292 each coordinate K(+).

It belongs to the carbohydrate kinase PfkB family. As to quaternary structure, homodimer.

The enzyme catalyses 5-amino-1-(beta-D-ribosyl)imidazole + ATP = 5-amino-1-(5-phospho-beta-D-ribosyl)imidazole + ADP + H(+). With respect to regulation, potassium may regulate kinase activity. Its function is as follows. Phosphorylates 5-amino-1-(beta-D-ribosyl)imidazole (AIRs) to form 5-amino-1-(5-phospho-beta-D-ribosyl)imidazole (AIR), an important intermediate in the purine and thiamine biosynthetic pathways. It allows the use of exogenous aminoimidazole riboside (AIRs) to satisfy the cellular requirement for purines and thiamine. The chain is Aminoimidazole riboside kinase from Salmonella typhimurium (strain LT2 / SGSC1412 / ATCC 700720).